We begin with the raw amino-acid sequence, 634 residues long: MYDLLKTIDDPADLRRLDRRQLQPLADELRAFVLDSVSKTGGHLSSNLGTVELTIALHYVFNTPDDRIVWDVGHQTYPHKILTGRRDGMKTLRQFDGISGFPRRSESEYDTFGTAHSSTSISAALGMAIGSKLNGDDRFSIAVIGDGAMTAGMAFEAMNNAGVSEDAKLLVILNDNDMSISPPVGALNRHLARLMSGRFYAAARAGVERVLSVAPPVLELARKLEEHAKGMVVPATLFEEFGFNYIGPIDGHDLDSLIPTLQNIKELRGPQFLHVVTKKGQGYKLAEADPVLYHGPGKFNPAEGIKPSTTPAKKTYTQVFGEWLCDAAELDARVVGITPAMREGSGMVEFEKRFPERYYDVGIAEQHAVTFAGGLATEGLKPVVAIYSTFLQRAYDQLIHDVALQNLPVVFAIDRAGLVGADGATHAGAYDLAFLRCIPNMTVMAASDENECRQMLHTALQQPNPTAVRYPRGAGTGVATVKAFTEIPLGKGEVRRRTSQPDGKRIAILAFGTMVAPSLAAADALDATVANMRFVKPIDAELVQALARTHDYLVTVEEGCVMGGAGSACVEAMMESGAVRPVLQLGLPDRFVDHGDPAKLLSLCGLDGDGIAKSIRERFLSHAADVASPAKRVA.

Thiamine diphosphate-binding positions include His-74 and Ala-115–Ser-117. Asp-146 is a binding site for Mg(2+). Residues Gly-147–Ala-148, Asn-176, Tyr-283, and Glu-365 contribute to the thiamine diphosphate site. Asn-176 is a Mg(2+) binding site.

Belongs to the transketolase family. DXPS subfamily. In terms of assembly, homodimer. Mg(2+) serves as cofactor. The cofactor is thiamine diphosphate.

The catalysed reaction is D-glyceraldehyde 3-phosphate + pyruvate + H(+) = 1-deoxy-D-xylulose 5-phosphate + CO2. Its pathway is metabolic intermediate biosynthesis; 1-deoxy-D-xylulose 5-phosphate biosynthesis; 1-deoxy-D-xylulose 5-phosphate from D-glyceraldehyde 3-phosphate and pyruvate: step 1/1. Functionally, catalyzes the acyloin condensation reaction between C atoms 2 and 3 of pyruvate and glyceraldehyde 3-phosphate to yield 1-deoxy-D-xylulose-5-phosphate (DXP). The sequence is that of 1-deoxy-D-xylulose-5-phosphate synthase from Burkholderia mallei (strain ATCC 23344).